We begin with the raw amino-acid sequence, 651 residues long: LysM domain receptor-like kinase 3 (651 aa).

The first 19 residues, 1–19, serve as a signal peptide directing secretion; that stretch reads MNLTFYIFFLSLLPSFSSS. Asparagine 2, asparagine 23, asparagine 42, asparagine 73, asparagine 86, asparagine 100, asparagine 114, and asparagine 177 each carry an N-linked (GlcNAc...) asparagine glycan. Residues 20–236 are Extracellular-facing; that stretch reads KPMNCSDTTR…TAKSGSHVPY (217 aa). Cystine bridges form between cysteine 24-cysteine 76, cysteine 31-cysteine 133, and cysteine 74-cysteine 131. Residues 142 to 186 enclose the LysM domain; that stretch reads MSYVAMAGDSVQSLSSRFGVSMDRIEDVNGILNLDNITAGDLLYI. The interval 196–216 is disordered; sequence YETSKINPPAPSPAPASSLAN. N-linked (GlcNAc...) asparagine glycosylation is found at asparagine 218 and asparagine 225. Residues 237 to 257 traverse the membrane as a helical segment; it reads IWIVGGLGVVLALLVLCILVC. Residues 258–651 are Cytoplasmic-facing; that stretch reads ICLRSSSCSS…QVFSGLVQGR (394 aa). Position 330 is a phosphothreonine (threonine 330). Positions 341-628 constitute a Protein kinase domain; the sequence is FSDSNLLGHG…VVISLSQILL (288 aa). ATP-binding positions include 347 to 355 and lysine 368; that span reads LGHGNYGSV. Phosphotyrosine is present on tyrosine 410. The active-site Proton acceptor is aspartate 464. At serine 468 the chain carries Phosphoserine. Phosphothreonine occurs at positions 500 and 505. Position 513 is a phosphotyrosine (tyrosine 513).

It belongs to the protein kinase superfamily. Ser/Thr protein kinase family.

The protein resides in the cell membrane. Putative Lysin motif (LysM) receptor kinase that may recognize microbe-derived N-acetylglucosamine (NAG)-containing ligands. This is LysM domain receptor-like kinase 3 (LYK3) from Arabidopsis thaliana (Mouse-ear cress).